Here is a 663-residue protein sequence, read N- to C-terminus: tRNA (guanine(26)-N(2))-dimethyltransferase (663 aa).

A mitochondrion-targeting transit peptide spans 1–16 (MSLARTILWLSRPLRP). The Trm1 methyltransferase domain occupies 56 to 498 (ATVTEGAAKI…APPEALWDIM (443 aa)). Arg83 contributes to the S-adenosyl-L-methionine binding site. Ser121 is subject to Phosphoserine. S-adenosyl-L-methionine contacts are provided by Arg165 and Asp183. 4 residues coordinate Zn(2+): Cys347, Cys350, Cys383, and Cys386. Ser516 is subject to Phosphoserine. The disordered stretch occupies residues 534–574 (IREDANPSSRQRGLKRFQANPEANWGPRPRARPGGKAASED). Positions 540–572 (PSSRQRGLKRFQANPEANWGPRPRARPGGKAAS) match the Nuclear localization signal motif. The C3H1-type zinc finger occupies 599–626 (RLKTFPCKRFKEGTCQLGDQCCYSHSPA). Ser624 carries the phosphoserine modification. The tract at residues 632 to 663 (GDIPIEECPETTTKISPGPKAAAGGIPGPGVD) is disordered.

This sequence belongs to the class I-like SAM-binding methyltransferase superfamily. Trm1 family.

It is found in the mitochondrion. The protein localises to the nucleus. It localises to the cytoplasm. It catalyses the reaction guanosine(26) in tRNA + 2 S-adenosyl-L-methionine = N(2)-dimethylguanosine(26) in tRNA + 2 S-adenosyl-L-homocysteine + 2 H(+). Dimethylates a single guanine residue at position 26 of most nuclear- and mitochondrial-encoded tRNAs using S-adenosyl-L-methionine as donor of the methyl groups. tRNA guanine(26)-dimethylation is required for redox homeostasis and ensure proper cellular proliferation and oxidative stress survival. This Mus musculus (Mouse) protein is tRNA (guanine(26)-N(2))-dimethyltransferase.